Consider the following 1915-residue polypeptide: Protein NLRC5 (1915 aa).

The interval 103–137 is disordered; sequence LGAGEESCPGPQLYHGAKRPFQSYGSSPRRKNSKK. The 320-residue stretch at 223-542 folds into the NACHT domain; the sequence is RVTVLLGKAG…HTVDKDTLVE (320 aa). Residue 229–236 coordinates ATP; it reads GKAGMGKT. LRR repeat units lie at residues 622–646, 716–740, 744–771, 772–796, 871–898, 900–923, 930–953, 1006–1033, 1034–1055, 1138–1161, 1162–1184, 1240–1263, 1265–1292, 1348–1371, 1481–1504, 1519–1542, 1552–1575, 1576–1598, 1603–1626, 1631–1654, 1659–1682, 1687–1711, 1715–1738, 1741–1768, 1769–1795, 1821–1845, and 1849–1872; these read VAET…SFHN, MGSL…LIQT, CSQL…LLPS, LPKL…LVKV, SPQL…AASQ, HIAQ…VLKA, LEDL…PREQ, THNL…LLPG, LGPL…VFSL, EVQL…LPQL, PQLS…LLAD, CNAL…CLLE, LPQL…LLET, AQQL…MLLN, SKLL…FSQV, CHHL…LLMG, KLHL…LSRM, TLLQ…CLAA, LPEL…CLAA, LPEL…LVKS, FEHL…ELAQ, PPQL…ALEQ, CPHI…RLPL, FPAL…LAQV, and MGQL…LLAQ.

The protein belongs to the NLRP family. As to quaternary structure, interacts with CHUK and IKBKB; prevents CHUK and IKBKB phosphorylation and inhibits their kinase activity. Interacts with RIGI and IFIH1; blocks the interaction of MAVS to RIGI. Expressed in spleen, thymus and lung.

It localises to the cytoplasm. Its function is as follows. Probable regulator of the NF-kappa-B and type I interferon signaling pathways. May also regulate the type II interferon signaling pathway. Plays a role in homeostatic control of innate immunity and in antiviral defense mechanisms. This chain is Protein NLRC5 (Nlrc5), found in Mus musculus (Mouse).